Reading from the N-terminus, the 198-residue chain is Putative 3-methyladenine DNA glycosylase (198 aa).

Belongs to the DNA glycosylase MPG family.

This chain is Putative 3-methyladenine DNA glycosylase, found in Natranaerobius thermophilus (strain ATCC BAA-1301 / DSM 18059 / JW/NM-WN-LF).